The primary structure comprises 590 residues: Oleate hydratase (590 aa).

FAD contacts are provided by Ala33, Glu56, Ser64, and Glu82. The active-site Proton acceptor is Glu82. Tyr200 serves as the catalytic Proton donor. FAD contacts are provided by Val249, Ser291, Thr508, and Ser512.

The protein belongs to the oleate hydratase family. In terms of assembly, monomer and homodimer. Both forms seem to be active. FAD serves as cofactor.

The catalysed reaction is (R)-10-hydroxyoctadecanoate = (9Z)-octadecenoate + H2O. The enzyme catalyses (9Z)-octadecenoate + H2O = 10-hydroxyoctadecanoate. It carries out the reaction (9Z)-hexadecenoate + H2O = 10-hydroxyhexadecanoate. It catalyses the reaction (9Z,12Z)-octadecadienoate + H2O = (12Z)-10-hydroxyoctadecenoate. The catalysed reaction is (12Z)-10-hydroxyoctadecenoate + H2O = 10,13-dihydroxyoctadecanoate. The enzyme catalyses (9Z,12Z,15Z)-octadecatrienoate + H2O = (12Z,15Z)-10-hydroxyoctadecadienoate. Its pathway is lipid metabolism; fatty acid metabolism. Catalyzes the hydration of oleate at its cis-9-double bond to yield 10-hydroxyoctadecanoate, probably in the (R) configuration, and of linoleate at its cis-9- and cis-12-double bond to yield 10-hydroxy-12-octadecenoate and 10,13-dihydroxyoctadecanoate. Is not active on trans-double bonds and esterified fatty acids as substrate; is only active on cis-9- and/or cis-12-double bond of C16 and C18 fatty acids without any trans-configurations, producing 10-hydroxy and 10,13-dihydroxy derivatives. Appears to play a role in oleic acid detoxification and bacterial virulence. The protein is Oleate hydratase (sph) of Streptococcus pyogenes serotype M49 (strain NZ131).